The following is a 319-amino-acid chain: Ferrochelatase (319 aa).

Fe cation-binding residues include H194 and E275.

Belongs to the ferrochelatase family.

Its subcellular location is the cytoplasm. It catalyses the reaction heme b + 2 H(+) = protoporphyrin IX + Fe(2+). The protein operates within porphyrin-containing compound metabolism; protoheme biosynthesis; protoheme from protoporphyrin-IX: step 1/1. Its function is as follows. Catalyzes the ferrous insertion into protoporphyrin IX. The sequence is that of Ferrochelatase from Vibrio vulnificus (strain CMCP6).